Consider the following 142-residue polypeptide: Large ribosomal subunit protein uL11 (142 aa).

Belongs to the universal ribosomal protein uL11 family. Part of the ribosomal stalk of the 50S ribosomal subunit. Interacts with L10 and the large rRNA to form the base of the stalk. L10 forms an elongated spine to which L12 dimers bind in a sequential fashion forming a multimeric L10(L12)X complex. One or more lysine residues are methylated.

Its function is as follows. Forms part of the ribosomal stalk which helps the ribosome interact with GTP-bound translation factors. This chain is Large ribosomal subunit protein uL11, found in Serratia proteamaculans (strain 568).